The sequence spans 429 residues: GDP-fucose protein O-fucosyltransferase 2 (429 aa).

The N-terminal stretch at methionine 1–alanine 21 is a signal peptide. Proline 53–asparagine 57 contributes to the GDP-beta-L-fucose binding site. Residue glutamate 54 is the Proton acceptor of the active site. A disulfide bridge connects residues cysteine 161 and cysteine 192. N-linked (GlcNAc...) asparagine glycosylation is found at asparagine 189, asparagine 209, and asparagine 259. Residues histidine 292–arginine 294, aspartate 371, and threonine 388–phenylalanine 389 each bind GDP-beta-L-fucose. Cysteine 412 and cysteine 419 are joined by a disulfide.

It belongs to the glycosyltransferase 68 family.

The protein resides in the endoplasmic reticulum. The protein localises to the golgi apparatus. It carries out the reaction L-seryl-[protein] + GDP-beta-L-fucose = 3-O-(alpha-L-fucosyl)-L-seryl-[protein] + GDP + H(+). The catalysed reaction is L-threonyl-[protein] + GDP-beta-L-fucose = 3-O-(alpha-L-fucosyl)-L-threonyl-[protein] + GDP + H(+). The protein operates within protein modification; protein glycosylation. Its function is as follows. Catalyzes the reaction that attaches fucose through an O-glycosidic linkage to a conserved serine or threonine residue in the consensus sequence C1-X-X-S/T-C2 of thrombospondin type I repeats (TSRs) where C1 and C2 are the first and second cysteines of the repeat, respectively. O-fucosylates members of several protein families including the ADAMTS, the thrombospondin (TSP) and spondin families. Required for the proper secretion of ADAMTS family members such as ADAMTSL1 and ADAMTS13. The O-fucosylation of TSRs is also required for restricting epithelial to mesenchymal transition (EMT), maintaining the correct patterning of mesoderm and localization of the definite endoderm. The sequence is that of GDP-fucose protein O-fucosyltransferase 2 (POFUT2) from Pan troglodytes (Chimpanzee).